The following is a 164-amino-acid chain: Protein CURVATURE THYLAKOID 1A, chloroplastic (164 aa).

Residues 1–62 constitute a chloroplast transit peptide; that stretch reads MAISVAASSS…LQKVELLKTR (62 aa). At alanine 63 the chain carries N-acetylalanine. The Stromal portion of the chain corresponds to 63 to 93; that stretch reads ASSEETSSIDTNELITDLKEKWDGLENKSTV. The chain crosses the membrane as a helical span at residues 94-114; it reads LIYGGGAIVAVWLSSIVVGAI. Residues 115–116 lie on the Lumenal side of the membrane; that stretch reads NS. The helical transmembrane segment at 117–137 threads the bilayer; sequence VPLLPKVMELVGLGYTGWFVY. Over 138-164 the chain is Stromal; the sequence is RYLLFKSSRKELAEDIESLKKKIAGSE. A coiled-coil region spans residues 140-164; it reads LLFKSSRKELAEDIESLKKKIAGSE.

Belongs to the CURT family. In terms of assembly, homo- and heterodimers and trimers.

It is found in the plastid. Its subcellular location is the chloroplast. The protein resides in the plastoglobule. The protein localises to the membrane. It localises to the chloroplast thylakoid membrane. In terms of biological role, determines thylakoid architecture by inducing membrane curvature. This Arabidopsis thaliana (Mouse-ear cress) protein is Protein CURVATURE THYLAKOID 1A, chloroplastic (CURT1A).